Consider the following 27-residue polypeptide: Putative phosphoglycerate kinase (27 aa).

It belongs to the phosphoglycerate kinase family. Monomer. The cofactor is Mg(2+).

It carries out the reaction (2R)-3-phosphoglycerate + ATP = (2R)-3-phospho-glyceroyl phosphate + ADP. This is Putative phosphoglycerate kinase from Pinus strobus (Eastern white pine).